We begin with the raw amino-acid sequence, 165 residues long: Urease accessory protein UreE (165 aa).

This sequence belongs to the UreE family.

Its subcellular location is the cytoplasm. Involved in urease metallocenter assembly. Binds nickel. Probably functions as a nickel donor during metallocenter assembly. This Flavobacterium johnsoniae (strain ATCC 17061 / DSM 2064 / JCM 8514 / BCRC 14874 / CCUG 350202 / NBRC 14942 / NCIMB 11054 / UW101) (Cytophaga johnsonae) protein is Urease accessory protein UreE.